Consider the following 370-residue polypeptide: GTPase Obg (370 aa).

One can recognise an Obg domain in the interval 1–159; it reads MKFIDEARIE…RMLKLELKVL (159 aa). Positions 128–147 are disordered; the sequence is LHFKSSTNRAPRQKTDGKPG. One can recognise an OBG-type G domain in the interval 160 to 334; sequence ADVGLLGMPN…LCYAIYDYLS (175 aa). GTP-binding positions include 166-173, 191-195, 213-216, 284-287, and 315-317; these read GMPNAGKS, FTTLA, DIPG, NKLD, and SAL. The Mg(2+) site is built by Ser173 and Thr193.

Belongs to the TRAFAC class OBG-HflX-like GTPase superfamily. OBG GTPase family. As to quaternary structure, monomer. The cofactor is Mg(2+).

It is found in the cytoplasm. In terms of biological role, an essential GTPase which binds GTP, GDP and possibly (p)ppGpp with moderate affinity, with high nucleotide exchange rates and a fairly low GTP hydrolysis rate. Plays a role in control of the cell cycle, stress response, ribosome biogenesis and in those bacteria that undergo differentiation, in morphogenesis control. In Burkholderia cenocepacia (strain ATCC BAA-245 / DSM 16553 / LMG 16656 / NCTC 13227 / J2315 / CF5610) (Burkholderia cepacia (strain J2315)), this protein is GTPase Obg.